The chain runs to 171 residues: UPF0398 protein Sez_1569 (171 aa).

This sequence belongs to the UPF0398 family.

This Streptococcus equi subsp. zooepidemicus (strain MGCS10565) protein is UPF0398 protein Sez_1569.